A 298-amino-acid chain; its full sequence is Lipoyl synthase (298 aa).

Cys40, Cys45, Cys51, Cys67, Cys71, Cys74, and Ser280 together coordinate [4Fe-4S] cluster. One can recognise a Radical SAM core domain in the interval 53-269; it reads AVRRTATFMI…KEIAMAKGFS (217 aa).

This sequence belongs to the radical SAM superfamily. Lipoyl synthase family. It depends on [4Fe-4S] cluster as a cofactor.

It localises to the cytoplasm. The catalysed reaction is [[Fe-S] cluster scaffold protein carrying a second [4Fe-4S](2+) cluster] + N(6)-octanoyl-L-lysyl-[protein] + 2 oxidized [2Fe-2S]-[ferredoxin] + 2 S-adenosyl-L-methionine + 4 H(+) = [[Fe-S] cluster scaffold protein] + N(6)-[(R)-dihydrolipoyl]-L-lysyl-[protein] + 4 Fe(3+) + 2 hydrogen sulfide + 2 5'-deoxyadenosine + 2 L-methionine + 2 reduced [2Fe-2S]-[ferredoxin]. The protein operates within protein modification; protein lipoylation via endogenous pathway; protein N(6)-(lipoyl)lysine from octanoyl-[acyl-carrier-protein]. Catalyzes the radical-mediated insertion of two sulfur atoms into the C-6 and C-8 positions of the octanoyl moiety bound to the lipoyl domains of lipoate-dependent enzymes, thereby converting the octanoylated domains into lipoylated derivatives. The polypeptide is Lipoyl synthase (Bacillus pumilus (strain SAFR-032)).